The chain runs to 172 residues: Peptide methionine sulfoxide reductase MsrA (172 aa).

Cys-14 is an active-site residue.

This sequence belongs to the MsrA Met sulfoxide reductase family.

The catalysed reaction is L-methionyl-[protein] + [thioredoxin]-disulfide + H2O = L-methionyl-(S)-S-oxide-[protein] + [thioredoxin]-dithiol. It carries out the reaction [thioredoxin]-disulfide + L-methionine + H2O = L-methionine (S)-S-oxide + [thioredoxin]-dithiol. In terms of biological role, has an important function as a repair enzyme for proteins that have been inactivated by oxidation. Catalyzes the reversible oxidation-reduction of methionine sulfoxide in proteins to methionine. The polypeptide is Peptide methionine sulfoxide reductase MsrA (Streptomyces coelicolor (strain ATCC BAA-471 / A3(2) / M145)).